Reading from the N-terminus, the 244-residue chain is Probable transcriptional regulatory protein DNO_1179 (244 aa).

The protein belongs to the TACO1 family.

It localises to the cytoplasm. The sequence is that of Probable transcriptional regulatory protein DNO_1179 from Dichelobacter nodosus (strain VCS1703A).